A 124-amino-acid chain; its full sequence is Small ribosomal subunit protein uS12 (124 aa).

The segment at 1–22 (MATVNQLVRKPRKRKVAKSDVP) is disordered. Residue Asp89 is modified to 3-methylthioaspartic acid. The disordered stretch occupies residues 99 to 124 (RGSLDTSGVQNRKQGRSKYGTKRPKK). Residues 111–124 (KQGRSKYGTKRPKK) show a composition bias toward basic residues.

Belongs to the universal ribosomal protein uS12 family. As to quaternary structure, part of the 30S ribosomal subunit. Contacts proteins S8 and S17. May interact with IF1 in the 30S initiation complex.

With S4 and S5 plays an important role in translational accuracy. Functionally, interacts with and stabilizes bases of the 16S rRNA that are involved in tRNA selection in the A site and with the mRNA backbone. Located at the interface of the 30S and 50S subunits, it traverses the body of the 30S subunit contacting proteins on the other side and probably holding the rRNA structure together. The combined cluster of proteins S8, S12 and S17 appears to hold together the shoulder and platform of the 30S subunit. This Marinomonas sp. (strain MWYL1) protein is Small ribosomal subunit protein uS12.